The primary structure comprises 105 residues: uncharacterized protein (105 aa).

A helical membrane pass occupies residues 25-47 (AHSVTLLFGIFRSSPFLLLFLLI). The tract at residues 54–89 (GRGSQRMKKKRGRANPSENLRERADPTNGPAENGKK) is disordered.

The protein localises to the membrane. This is an uncharacterized protein from Saccharomyces cerevisiae (strain ATCC 204508 / S288c) (Baker's yeast).